A 214-amino-acid polypeptide reads, in one-letter code: Riboflavin kinase (214 aa).

An H-T-H motif-like region spans residues 1-91; that stretch reads MRSIMEVETL…YCSIFEDGGA (91 aa). Residues 92-214 form a riboflavin kinase region; it reads PVMRGKVVTG…DGDEVEVTLE (123 aa). CDP is bound at residue 101-106; it reads GLGEGQ. Residues Thr130 and Asn132 each coordinate Mg(2+). FMN is bound by residues Thr182 and Glu190. 195–198 provides a ligand contact to CDP; that stretch reads IKLR.

It belongs to the archaeal riboflavin kinase family. It depends on Mg(2+) as a cofactor.

The enzyme catalyses riboflavin + CTP = CDP + FMN + H(+). The protein operates within cofactor biosynthesis; FMN biosynthesis; FMN from riboflavin (CTP route): step 1/1. Catalyzes the CTP-dependent phosphorylation of riboflavin (vitamin B2) to form flavin mononucleotide (FMN). The chain is Riboflavin kinase (ribK) from Methanocella arvoryzae (strain DSM 22066 / NBRC 105507 / MRE50).